A 69-amino-acid chain; its full sequence is Antimicrobial peptide ISAMP (69 aa).

Positions 1–23 (MRAVAIFIVTLLVLECVYFVMSE) are cleaved as a signal peptide.

Expressed in the fat body, hemocytes and salivary glands of partially-fed female ticks. Not expressed in the midgut.

It localises to the secreted. Functionally, has antimicrobial activity against B.cereus (MIC=5.8 ug/ml), B.subtilis (MIC=12.3 ug/ml), S.aureus (MIC=10.4 ug/ml), E.coli Edl 933 (MIC=3.2 ug/ml) and E.coli MG/655 (MIC=4.2 ug/ml). Non-hemolytic. This is Antimicrobial peptide ISAMP from Ixodes scapularis (Black-legged tick).